Reading from the N-terminus, the 491-residue chain is Glutamine synthetase (491 aa).

Residues 23–111 (NNVRQVLCAF…MFGNVYEAWG (89 aa)) enclose the GS beta-grasp domain. Positions 119-491 (PRGYVAKRYE…PWEFMKYFDI (373 aa)) constitute a GS catalytic domain. The Mg(2+) site is built by Glu-143 and Glu-145. Glu-225 is a binding site for ATP. Residues Glu-230 and Glu-238 each coordinate Mg(2+). L-glutamate contacts are provided by residues 282–283 (NA) and Ala-283. His-287 contributes to the Mg(2+) binding site. Residues 289–291 (HQS) and Ser-291 each bind ATP. Arg-344, Glu-350, and Arg-362 together coordinate L-glutamate. The ATP site is built by Arg-362 and Arg-367. Glu-381 is a Mg(2+) binding site. Arg-383 is an L-glutamate binding site.

Belongs to the glutamine synthetase family. As to quaternary structure, oligomer of 12 subunits arranged in the form of two hexagons. It depends on Mg(2+) as a cofactor.

The protein localises to the cytoplasm. It carries out the reaction L-glutamate + NH4(+) + ATP = L-glutamine + ADP + phosphate + H(+). In terms of biological role, probably involved in nitrogen metabolism via ammonium assimilation. Catalyzes the ATP-dependent biosynthesis of glutamine from glutamate and ammonia. Beta-glutamate is a much poorer substrate than alpha-glutamate. This chain is Glutamine synthetase, found in Archaeoglobus fulgidus (strain ATCC 49558 / DSM 4304 / JCM 9628 / NBRC 100126 / VC-16).